Consider the following 102-residue polypeptide: Small ribosomal subunit protein bS6 (102 aa).

Belongs to the bacterial ribosomal protein bS6 family.

Functionally, binds together with bS18 to 16S ribosomal RNA. This Solidesulfovibrio magneticus (strain ATCC 700980 / DSM 13731 / RS-1) (Desulfovibrio magneticus) protein is Small ribosomal subunit protein bS6.